We begin with the raw amino-acid sequence, 372 residues long: Glutamine synthetase (372 aa).

The GS beta-grasp domain maps to 26 to 105 (IIAEYVWIDS…VLAECWNNDG (80 aa)). The region spanning 112 to 372 (HRHEAAKLFE…MTKEYERESL (261 aa)) is the GS catalytic domain.

This sequence belongs to the glutamine synthetase family. As to quaternary structure, homooctamer.

It localises to the cytoplasm. The enzyme catalyses L-glutamate + NH4(+) + ATP = L-glutamine + ADP + phosphate + H(+). This is Glutamine synthetase (GLN1) from Kluyveromyces lactis (strain ATCC 8585 / CBS 2359 / DSM 70799 / NBRC 1267 / NRRL Y-1140 / WM37) (Yeast).